The chain runs to 460 residues: Serine--tRNA ligase (460 aa).

Over residues alanine 43–glycine 66 the composition is skewed to basic and acidic residues. The segment at alanine 43 to leucine 81 is disordered. L-serine is bound at residue threonine 242–glutamate 244. ATP-binding positions include arginine 273–glutamate 275 and valine 289. Position 296 (glutamate 296) interacts with L-serine. Glutamate 369–serine 372 serves as a coordination point for ATP. Serine 405 lines the L-serine pocket.

This sequence belongs to the class-II aminoacyl-tRNA synthetase family. Type-1 seryl-tRNA synthetase subfamily. Homodimer. The tRNA molecule binds across the dimer.

It localises to the cytoplasm. It carries out the reaction tRNA(Ser) + L-serine + ATP = L-seryl-tRNA(Ser) + AMP + diphosphate + H(+). The enzyme catalyses tRNA(Sec) + L-serine + ATP = L-seryl-tRNA(Sec) + AMP + diphosphate + H(+). It functions in the pathway aminoacyl-tRNA biosynthesis; selenocysteinyl-tRNA(Sec) biosynthesis; L-seryl-tRNA(Sec) from L-serine and tRNA(Sec): step 1/1. Its function is as follows. Catalyzes the attachment of serine to tRNA(Ser). Is also probably able to aminoacylate tRNA(Sec) with serine, to form the misacylated tRNA L-seryl-tRNA(Sec), which will be further converted into selenocysteinyl-tRNA(Sec). In Haloarcula marismortui (strain ATCC 43049 / DSM 3752 / JCM 8966 / VKM B-1809) (Halobacterium marismortui), this protein is Serine--tRNA ligase (serS).